A 754-amino-acid chain; its full sequence is Phosphatase and actin regulator 4B (754 aa).

Positions 1–12 are enriched in basic and acidic residues; that stretch reads MENRDDEVEHQH. Disordered stretches follow at residues 1–38, 83–105, 120–625, and 637–666; these read MENRDDEVEHQHSTMGSEGGTAGDGTPPPKRKGKFSTL, KELPDNESGEAHGHKAPYVKNGH, VHSP…SKEQ, and LTRRLSQRPTAEELEQRNILQPKNEADRQA. The RPEL 1 repeat unit spans residues 61 to 86; that stretch reads EVLERKMSMRRPRQELIEQGVLKELP. 3 stretches are compositionally biased toward basic and acidic residues: residues 138 to 153, 184 to 221, and 229 to 241; these read PEDRRARAPSDGDHRG, HGEDIRRGGRAHAEMDKRPGLMKAPSEDGRRTRPEPDW, and SSVEEGRGRRESD. Low complexity-rich tracts occupy residues 296–307 and 316–333; these read SFCSSNSSSSSS and SSAGANTAPPGGAPLTTS. 4 stretches are compositionally biased toward pro residues: residues 348-357, 381-390, 427-445, and 460-478; these read KQPPMPPPKP, KPSPPMPPKR, LPPPPPSPPLPTHIPPSPP, and YPLPQPLPVHFDPPSPPED. 3 stretches are compositionally biased toward acidic residues: residues 483-503, 541-557, and 566-576; these read DEDDYSDEEEEEEDDEDDEEP, SEEEEDEEDQHPEESDS, and DESDEDEEDDS. Over residues 605–615 the composition is skewed to basic and acidic residues; that stretch reads QAPERQAKSEH. 2 RPEL repeats span residues 635–660 and 673–698; these read TALTRRLSQRPTAEELEQRNILQPKN and RRLTRKLSQRPTVAELQARKILRFHE. A Phosphoserine modification is found at S642.

It belongs to the phosphatase and actin regulator family. In terms of assembly, binds ppp1ca and actin.

The protein localises to the cytoplasm. Its subcellular location is the cell projection. It localises to the lamellipodium. Its function is as follows. Regulator of protein phosphatase 1 (PP1) required for neural tube and optic fissure closure, and enteric neural crest cell (ENCCs) migration during development. Acts as an activator of PP1. During neural tube closure, localizes to the ventral neural tube and activates PP1, leading to down-regulate cell proliferation within cranial neural tissue and the neural retina. Also acts as a regulator of migration of enteric neural crest cells (ENCCs) by activating PP1, leading to repression of the integrin signaling through the rho/rock pathway. In Danio rerio (Zebrafish), this protein is Phosphatase and actin regulator 4B (phactr4b).